We begin with the raw amino-acid sequence, 359 residues long: Probable tyrosine-protein phosphatase pir-2 (359 aa).

The 176-residue stretch at 16–191 (QPVGNVIPRT…AKDKRDKQVD (176 aa)) folds into the Tyrosine-protein phosphatase domain. The active-site Phosphocysteine intermediate is the Cys131. A compositionally biased stretch (basic and acidic residues) spans 184-199 (DKRDKQVDSDSDSSER). Disordered regions lie at residues 184 to 211 (DKRD…KHRE), 234 to 259 (SVSG…PHHW), and 274 to 328 (PVAN…RNRM). Basic residues predominate over residues 200 to 210 (QRKKKNKRKHR). Polar residues predominate over residues 234-246 (SVSGTDYQNSPNG). The segment covering 290-309 (PQEEEEFEEDFEEIEEETET) has biased composition (acidic residues). The segment covering 319–328 (SKRRARRNRM) has biased composition (basic residues).

This sequence belongs to the protein-tyrosine phosphatase family. Non-receptor class CDC14 subfamily.

The enzyme catalyses O-phospho-L-tyrosyl-[protein] + H2O = L-tyrosyl-[protein] + phosphate. The polypeptide is Probable tyrosine-protein phosphatase pir-2 (Caenorhabditis elegans).